The chain runs to 337 residues: Glyceraldehyde-3-phosphate dehydrogenase 3, cytosolic (337 aa).

The binding to NAD stretch occupies residues 1 to 151 (MAKIKIGING…YKSDINIVSN (151 aa)). NAD(+) is bound by residues 13–14 (RI), Asp35, and Arg82. A catalytic region spans residues 152-337 (ASCTTNCLAP…DLIRHMNSTK (186 aa)). Residues 153-155 (SCT), Thr184, 213-214 (TG), and Arg236 each bind D-glyceraldehyde 3-phosphate. The active-site Nucleophile is Cys154. Residue Asn318 coordinates NAD(+).

The protein belongs to the glyceraldehyde-3-phosphate dehydrogenase family. In terms of assembly, homotetramer.

It localises to the cytoplasm. It catalyses the reaction D-glyceraldehyde 3-phosphate + phosphate + NAD(+) = (2R)-3-phospho-glyceroyl phosphate + NADH + H(+). The protein operates within carbohydrate degradation; glycolysis; pyruvate from D-glyceraldehyde 3-phosphate: step 1/5. Functionally, key enzyme in glycolysis that catalyzes the first step of the pathway by converting D-glyceraldehyde 3-phosphate (G3P) into 3-phospho-D-glyceroyl phosphate. Essential for the maintenance of cellular ATP levels and carbohydrate metabolism. The sequence is that of Glyceraldehyde-3-phosphate dehydrogenase 3, cytosolic (GAPC3) from Zea mays (Maize).